A 276-amino-acid chain; its full sequence is MSLCEDMLLCNYRKCRIKLSGYAWVTACSHIFCDQHGSGEFSRSPAICPACNSTLSGKLDIVRTELSPSEEYKAMVLAGLRPEVVLDISSRALAFWTYQVHQERLYQEYNFSKAENHLKQMEKMYMQQIQSKNIELTSMKGEVISMKKVLEEYKKKFSDISEKLMERNRQYQKLQGLYDSLRLRNITIASQEGSLEPGMIPQSGVFGFPPGNNSKFSLDHIPVGNQGGGDEDVQFRPFFVCSPTAPEPINNFFSFASPSHEAEQQVCSRAFKAKRI.

The segment at 10-52 (CNYRKCRIKLSGYAWVTACSHIFCDQHGSGEFSRSPAICPACN) adopts an RING-type; atypical zinc-finger fold. The stretch at 146–182 (MKKVLEEYKKKFSDISEKLMERNRQYQKLQGLYDSLR) forms a coiled coil.

In terms of assembly, interacts with CCNB1, UBE2L3 and NF2. Ubiquitinated; autoubiquitinated. Post-translationally, phosphorylated by CDK1 on serine or threonine residues (in vitro). As to expression, expressed predominantly in the testes and 17 day embryos (corresponding to prophase I in females). Weakly or not expressed in other tissues.

It localises to the nucleus. The protein localises to the chromosome. It carries out the reaction S-ubiquitinyl-[E2 ubiquitin-conjugating enzyme]-L-cysteine + [acceptor protein]-L-lysine = [E2 ubiquitin-conjugating enzyme]-L-cysteine + N(6)-ubiquitinyl-[acceptor protein]-L-lysine.. It functions in the pathway protein modification; protein ubiquitination. Functionally, ubiquitin E3 ligase that acts as a limiting factor for crossing-over during meiosis: required during zygonema to limit the colocalization of RNF212 with MutS-gamma-associated recombination sites and thereby establish early differentiation of crossover and non-crossover sites. Later, it is directed by MutL-gamma to stably accumulate at designated crossover sites. Probably promotes the dissociation of RNF212 and MutS-gamma to allow the progression of recombination and the implementation of the final steps of crossing over. Modulates cyclin-B levels and participates in the regulation of cell cycle progression through the G2 phase. Overexpression causes delayed entry into mitosis. This is E3 ubiquitin-protein ligase CCNB1IP1 (Ccnb1ip1) from Mus musculus (Mouse).